The following is a 450-amino-acid chain: ATP-dependent protease ATPase subunit HslU (450 aa).

ATP-binding positions include Val27, 69–74 (GVGKTE), Asp263, Glu328, and Arg400.

It belongs to the ClpX chaperone family. HslU subfamily. A double ring-shaped homohexamer of HslV is capped on each side by a ring-shaped HslU homohexamer. The assembly of the HslU/HslV complex is dependent on binding of ATP.

Its subcellular location is the cytoplasm. Its function is as follows. ATPase subunit of a proteasome-like degradation complex; this subunit has chaperone activity. The binding of ATP and its subsequent hydrolysis by HslU are essential for unfolding of protein substrates subsequently hydrolyzed by HslV. HslU recognizes the N-terminal part of its protein substrates and unfolds these before they are guided to HslV for hydrolysis. This chain is ATP-dependent protease ATPase subunit HslU, found in Aquifex aeolicus (strain VF5).